We begin with the raw amino-acid sequence, 150 residues long: SsrA-binding protein (150 aa).

The protein belongs to the SmpB family.

It localises to the cytoplasm. Its function is as follows. Required for rescue of stalled ribosomes mediated by trans-translation. Binds to transfer-messenger RNA (tmRNA), required for stable association of tmRNA with ribosomes. tmRNA and SmpB together mimic tRNA shape, replacing the anticodon stem-loop with SmpB. tmRNA is encoded by the ssrA gene; the 2 termini fold to resemble tRNA(Ala) and it encodes a 'tag peptide', a short internal open reading frame. During trans-translation Ala-aminoacylated tmRNA acts like a tRNA, entering the A-site of stalled ribosomes, displacing the stalled mRNA. The ribosome then switches to translate the ORF on the tmRNA; the nascent peptide is terminated with the 'tag peptide' encoded by the tmRNA and targeted for degradation. The ribosome is freed to recommence translation, which seems to be the essential function of trans-translation. The polypeptide is SsrA-binding protein (Borreliella burgdorferi (strain ATCC 35210 / DSM 4680 / CIP 102532 / B31) (Borrelia burgdorferi)).